The chain runs to 168 residues: Secretory-abundant heat soluble protein 33020 (168 aa).

Residues 1–19 (MARFLVALALFGVVAMTAA) form the signal peptide. Residues 26 to 57 (EWSGKPWLGKFVAEVSDKSENWEAFVDALGLP) are SAHS-c1. Residues 72–100 (YKQGEHYHHILSLPDKNINKDIEFTLGQE) form an SAHS-c2 region. Residues 113 to 162 (KYFEDGNKLVADVSIPAKGKSIHDVYDVQGDQLIKSYKVGDVVAKKWFKK) are SAHS-c3.

The protein belongs to the Secretory-abundant heat soluble protein (SAHS) family.

Its subcellular location is the secreted. In terms of biological role, secreted heat soluble protein acting as a molecular shield in water-deficient condition. Tardigrade-specific intrinsically disordered proteins (TDPs) are essential for desiccation tolerance by forming non-crystalline amorphous solids upon desiccation, and this vitrified state mirrors their protective capabilities. The chain is Secretory-abundant heat soluble protein 33020 from Hypsibius exemplaris (Freshwater tardigrade).